Consider the following 180-residue polypeptide: MAQVNGDLPAVNSATAQHLLDIPVIHDGVVAFRNNPFGKKSIAIGDSAYQTFAAPLLPYLARPWGYLRPYAEKADALGDQTLTKVEERVPVIKKPTEELYAGAKGIIALPIRTGFEAKDHVFKTYAQEKKKVGGENLVTYGKAIVSTTLITTSEIIIWVGDVMHYKKEEAKDVVNEKVNN.

This sequence belongs to the perilipin family. Interacts with class I hydrophobin Hydr1. Interacts also with the cAMP-dependent protein kinase catalytic subunit PkaC1.

Its subcellular location is the lipid droplet. Its function is as follows. Lipid droplet coating protein that regulates lipid metabolism, appressorial turgor pressure, and virulence. Mature appressoria with high turgor pressure are essential to penetrate the leaf surface. This Colletotrichum siamense (Anthracnose fungus) protein is Lipid droplet coating protein Cap20.